A 338-amino-acid polypeptide reads, in one-letter code: Anthranilate phosphoribosyltransferase (338 aa).

Residues glycine 81, glycine 84–aspartate 85, serine 89, asparagine 91–threonine 94, lysine 109–serine 117, and alanine 121 each bind 5-phospho-alpha-D-ribose 1-diphosphate. Glycine 81 lines the anthranilate pocket. Serine 93 is a Mg(2+) binding site. Asparagine 112 serves as a coordination point for anthranilate. Arginine 167 is an anthranilate binding site. The Mg(2+) site is built by aspartate 226 and glutamate 227.

It belongs to the anthranilate phosphoribosyltransferase family. Homodimer. Requires Mg(2+) as cofactor.

It catalyses the reaction N-(5-phospho-beta-D-ribosyl)anthranilate + diphosphate = 5-phospho-alpha-D-ribose 1-diphosphate + anthranilate. The protein operates within amino-acid biosynthesis; L-tryptophan biosynthesis; L-tryptophan from chorismate: step 2/5. Its function is as follows. Catalyzes the transfer of the phosphoribosyl group of 5-phosphorylribose-1-pyrophosphate (PRPP) to anthranilate to yield N-(5'-phosphoribosyl)-anthranilate (PRA). The chain is Anthranilate phosphoribosyltransferase from Rhodopseudomonas palustris (strain BisB5).